The following is a 207-amino-acid chain: MLGRPKLVLASGSPRRLALLNQAGIEPDALRPADVDETPIRGELPRACANRLARAKAEAALQSIQLDDDLRGSYLLAADTVVAVGRRILPKAELTDEASQCLRLLSGRNHRVYTAVCLVTPKEAFRQRLVETRVRFKRLSEEDIAGYVGSGEWRGKAGGYAVQGIAGSFVVKLVGSYTNVVGLPLYETISLLGGEGFPIRHGWLNAG.

The active-site Proton acceptor is Asp79.

This sequence belongs to the Maf family. YhdE subfamily. The cofactor is a divalent metal cation.

It is found in the cytoplasm. It carries out the reaction dTTP + H2O = dTMP + diphosphate + H(+). The catalysed reaction is UTP + H2O = UMP + diphosphate + H(+). Functionally, nucleoside triphosphate pyrophosphatase that hydrolyzes dTTP and UTP. May have a dual role in cell division arrest and in preventing the incorporation of modified nucleotides into cellular nucleic acids. The polypeptide is dTTP/UTP pyrophosphatase (Rhodopseudomonas palustris (strain ATCC BAA-98 / CGA009)).